A 75-amino-acid chain; its full sequence is Small ribosomal subunit protein bS18c (75 aa).

Belongs to the bacterial ribosomal protein bS18 family. Part of the 30S ribosomal subunit.

It localises to the plastid. It is found in the chloroplast. The polypeptide is Small ribosomal subunit protein bS18c (Adiantum capillus-veneris (Maidenhair fern)).